The chain runs to 332 residues: Serine, glycine, tyrosine and glutamine-rich protein (332 aa).

A signal peptide spans 1–17; sequence MMKTVLLLVVLVGVAYC. The tract at residues 39–81 is disordered; sequence SSSSSSSSSSGGGGSSGGGASGGGGGGGSSGGGGASGGGGGGS. A compositionally biased stretch (gly residues) spans 48 to 81; that stretch reads SGGGGSSGGGASGGGGGGGSSGGGGASGGGGGGS.

In terms of tissue distribution, prismatic layer of shell (at protein level). Expressed primarily in the mantle with highest level in the mantle edge and lower level in the mantle pallium.

Its subcellular location is the secreted. This chain is Serine, glycine, tyrosine and glutamine-rich protein, found in Margaritifera margaritifera (Freshwater pearl mussel).